Reading from the N-terminus, the 56-residue chain is Photosystem II reaction center X protein (56 aa).

A helical transmembrane segment spans residues 27-47; that stretch reads IGSFLAAGALIVAPAAAALIW.

The protein belongs to the PsbX family. Type 2 subfamily. As to quaternary structure, PSII consists of a core antenna complex that captures photons, and an electron transfer chain that converts photonic excitation into a charge separation. PSII forms dimeric complexes.

It localises to the cellular thylakoid membrane. Involved in the binding and/or turnover of quinones at the Q(B) site of Photosystem II. This is Photosystem II reaction center X protein from Prochlorococcus marinus (strain NATL2A).